The following is a 162-amino-acid chain: Regulator of ribonuclease activity A (162 aa).

This sequence belongs to the RraA family. As to quaternary structure, homotrimer. Binds to both RNA-binding sites in the C-terminal region of Rne and to RhlB.

Its subcellular location is the cytoplasm. Functionally, globally modulates RNA abundance by binding to RNase E (Rne) and regulating its endonucleolytic activity. Can modulate Rne action in a substrate-dependent manner by altering the composition of the degradosome. Modulates RNA-binding and helicase activities of the degradosome. The protein is Regulator of ribonuclease activity A of Haemophilus influenzae (strain 86-028NP).